We begin with the raw amino-acid sequence, 363 residues long: Histone-lysine N-methyltransferase ASHH3 (363 aa).

The region spanning 63–114 (DDGIFCSCSSSSPGSSSTVCGSNCHCGMLFSSCSSSCKCGSECNNKPFQQRH) is the AWS domain. In terms of domain architecture, SET spans 116-233 (KKMKLIQTEK…KGEHLTYDYQ (118 aa)). One can recognise a Post-SET domain in the interval 239-255 (ADQDCHCGAVGCRRKLG).

The protein belongs to the class V-like SAM-binding methyltransferase superfamily. Histone-lysine methyltransferase family. SET2 subfamily.

Its subcellular location is the nucleus. The protein resides in the chromosome. It is found in the centromere. The catalysed reaction is L-lysyl-[histone] + S-adenosyl-L-methionine = N(6)-methyl-L-lysyl-[histone] + S-adenosyl-L-homocysteine + H(+). Functionally, histone methyltransferase. This is Histone-lysine N-methyltransferase ASHH3 (ASHH3) from Arabidopsis thaliana (Mouse-ear cress).